The following is a 30-amino-acid chain: Photosystem I reaction center subunit XII (30 aa).

A helical transmembrane segment spans residues 5 to 25 (SQIFFALCIALTAAVLAIGLG).

The protein belongs to the PsaM family.

The protein localises to the plastid. It is found in the chloroplast thylakoid membrane. In Emiliania huxleyi (Coccolithophore), this protein is Photosystem I reaction center subunit XII.